A 330-amino-acid chain; its full sequence is Fructose-1,6-bisphosphatase class 1 (330 aa).

Positions 84, 103, 105, and 106 each coordinate Mg(2+). Substrate-binding positions include Asp-106–Ser-109, Asn-196, and Lys-262. Glu-268 is a Mg(2+) binding site.

Belongs to the FBPase class 1 family. Homotetramer. Requires Mg(2+) as cofactor.

It localises to the cytoplasm. The enzyme catalyses beta-D-fructose 1,6-bisphosphate + H2O = beta-D-fructose 6-phosphate + phosphate. It functions in the pathway carbohydrate biosynthesis; gluconeogenesis. The protein is Fructose-1,6-bisphosphatase class 1 of Shewanella sp. (strain MR-7).